The primary structure comprises 673 residues: Annexin A6 (673 aa).

A2 carries the post-translational modification N-acetylalanine. S13 carries the phosphoserine modification. Annexin repeat units follow at residues 20–91 (FDPN…GLMR), 92–163 (PPAY…VLLQ), 175–247 (DLVQ…AVVK), 251–322 (STPE…KLSG), 363–434 (FNPD…GLMM), 435–506 (PPAH…SLAT), 521–595 (EDAQ…AIVQ), and 599–670 (NKPL…ALCG). Y30 carries the phosphotyrosine modification. N6-acetyllysine is present on residues K63, K68, K75, and K81. Y201 carries the phosphotyrosine modification. 3 positions are modified to N6-acetyllysine: K306, K370, and K418. At S422 the chain carries Phosphoserine. Residue K483 is modified to N6-acetyllysine. S537 carries the post-translational modification Phosphoserine. N6-acetyllysine is present on K620.

It belongs to the annexin family. In terms of processing, phosphorylated in response to growth factor stimulation.

It is found in the cytoplasm. It localises to the melanosome. In terms of biological role, may associate with CD21. May regulate the release of Ca(2+) from intracellular stores. The protein is Annexin A6 (ANXA6) of Homo sapiens (Human).